The chain runs to 251 residues: Tryptophan synthase alpha chain (251 aa).

Active-site proton acceptor residues include Glu46 and Asp57.

Belongs to the TrpA family. In terms of assembly, tetramer of two alpha and two beta chains.

It catalyses the reaction (1S,2R)-1-C-(indol-3-yl)glycerol 3-phosphate + L-serine = D-glyceraldehyde 3-phosphate + L-tryptophan + H2O. Its pathway is amino-acid biosynthesis; L-tryptophan biosynthesis; L-tryptophan from chorismate: step 5/5. The alpha subunit is responsible for the aldol cleavage of indoleglycerol phosphate to indole and glyceraldehyde 3-phosphate. The polypeptide is Tryptophan synthase alpha chain (Karelsulcia muelleri (strain GWSS) (Sulcia muelleri)).